We begin with the raw amino-acid sequence, 1163 residues long: AF4/FMR2 family member 4 (1163 aa).

Residues 1 to 19 (MNREDRNVLRMKERERRNQ) are compositionally biased toward basic and acidic residues. Disordered regions lie at residues 1-48 (MNRE…EDKL), 76-312 (AIPK…ASGD), 324-904 (THSW…PRRT), and 1034-1073 (NSYN…SSGA). Residues 115 to 128 (PSTSQSQKRSSGLQ) show a composition bias toward polar residues. S120 carries the post-translational modification Phosphoserine. Low complexity-rich tracts occupy residues 129–148 (SGHS…NSSG) and 177–194 (RSSS…NSSH). Positions 198–217 (HGNDHHSKEHQRSKSPRDPD) are enriched in basic and acidic residues. Phosphoserine is present on S212. Composition is skewed to polar residues over residues 227-251 (PFSS…SMLQ), 273-285 (EHYS…NSMT), and 350-375 (KESQ…NGHQ). 4 positions are modified to phosphoserine: S387, S388, S389, and S392. Polar residues predominate over residues 403 to 412 (PRSTPGSNSE). Positions 413-429 (PSHHNSEGADNSRDDSS) are enriched in basic and acidic residues. The segment covering 430–462 (SHSGSESSSGSDSESESSSSDSEANEPSQSASP) has biased composition (low complexity). Residues S487, S490, and S491 each carry the phosphoserine modification. Composition is skewed to polar residues over residues 488 to 501 (PASS…SSQG), 510 to 528 (GTGN…SSAT), and 549 to 560 (SPAQSDSTTQRR). S549 is modified (phosphoserine). Positions 568-586 (KKAEKAAAEEPRGGLKIES) are enriched in basic and acidic residues. K583 is covalently cross-linked (Glycyl lysine isopeptide (Lys-Gly) (interchain with G-Cter in SUMO2)). Over residues 599-612 (SRHKAATKGSRKPN) the composition is skewed to basic residues. A compositionally biased stretch (basic and acidic residues) spans 613 to 627 (IKKESKSSPRPTAEK). Phosphoserine is present on S671. T674 is subject to Phosphothreonine. Phosphoserine occurs at positions 680, 694, 703, and 706. Y712 is subject to Phosphotyrosine. Composition is skewed to basic and acidic residues over residues 730–761 (PYKE…EKVS), 769–789 (KNED…DKNS), and 799–811 (ESSK…EKDL). S814 is modified (phosphoserine). K822 is modified (N6-acetyllysine). Residues S836, S1043, S1055, S1058, and S1062 each carry the phosphoserine modification. Residues 836 to 862 (SQSSSLKSSSNSNKETSGSSKNSSSTS) are compositionally biased toward low complexity. The span at 1062 to 1073 (SPGNSGNYSSGA) shows a compositional bias: low complexity.

Belongs to the AF4 family. In terms of assembly, component of the super elongation complex (SEC), at least composed of EAF1, EAF2, CDK9, MLLT3/AF9, AFF (AFF1 or AFF4), the P-TEFb complex and ELL (ELL, ELL2 or ELL3). Interacts with ELL3; the interaction is direct. Interacts with ELL2; the interaction is direct and leads to stabilize ELL2 and prevent ELL2 ubiquitination and degradation. Dephosphorylated at Ser-549 by the PNUTS-PP1 complex, promoting RNA polymerase II transcription pause-release. In terms of tissue distribution, ubiquitously expressed. Strongly expressed in heart, placenta, skeletal muscle, pancreas and to a lower extent in brain.

It is found in the nucleus. Its subcellular location is the chromosome. In terms of biological role, key component of the super elongation complex (SEC), a complex required to increase the catalytic rate of RNA polymerase II transcription by suppressing transient pausing by the polymerase at multiple sites along the DNA. In the SEC complex, AFF4 acts as a central scaffold that recruits other factors through direct interactions with ELL proteins (ELL, ELL2 or ELL3) and the P-TEFb complex. In case of infection by HIV-1 virus, the SEC complex is recruited by the viral Tat protein to stimulate viral gene expression. The chain is AF4/FMR2 family member 4 (AFF4) from Homo sapiens (Human).